Consider the following 1595-residue polypeptide: Collagen-like protein 2 (1595 aa).

2 N-linked (GlcNAc...) asparagine; by host glycosylation sites follow: Asn87 and Asn134. Collagen-like domains follow at residues 97-155, 175-233, 236-295, and 299-358; these read LRGE…NGDV, QVGL…KGEG, GSKG…KGDI, and GIKG…KGMK. Over residues 181–190 the composition is skewed to low complexity; sequence SQGDQGYKGD. 2 disordered regions span residues 181–577 and 604–1326; these read SQGD…SPDL and TDIK…GIKG. 14 stretches are compositionally biased toward basic and acidic residues: residues 191–200, 209–448, 456–466, 474–501, 510–561, 606–615, 622–702, 718–825, 832–883, 895–1041, 1048–1098, 1107–1151, 1159–1250, and 1265–1300; these read QGSKGDKGQK, KGDK…KGTK, YKGDIGDKGIK, DKGD…DKGY, DNGE…DKGE, IKGEKGDKGE, KGDK…DKGD, KGDK…DKGI, KGDK…KGFK, KGNK…DQGT, KGDK…KGIK, NKGD…KGDQ, and KGDK…DQGI. Residues Asn274, Asn280, and Asn286 are each glycosylated (N-linked (GlcNAc...) asparagine; by host). N-linked (GlcNAc...) asparagine; by host glycans are attached at residues Asn373, Asn382, Asn400, and Asn409. Collagen-like domains are found at residues 380–559, 608–907, 920–1039, 1043–1102, and 1128–1307; these read GDNG…KGDK, GEKG…KGEN, GDKG…KGDK, GTNG…KGET, and GDQG…SGAS. Asn1345, Asn1420, and Asn1545 each carry an N-linked (GlcNAc...) asparagine; by host glycan. The disordered stretch occupies residues 1538–1585; that stretch reads SAFDKGGNGSIRFNPPSSGTKGSGGGGSVQGGGGTIPNDGYPGGNGGP. A compositionally biased stretch (gly residues) spans 1558–1585; sequence KGSGGGGSVQGGGGTIPNDGYPGGNGGP.

Post-translationally, may be hydroxylated on lysine by the viral-encoded procollagen-lysine,2-oxoglutarate 5-dioxygenase.

Its subcellular location is the virion. In terms of biological role, may participate in the formation of a layer of cross-linked glycosylated fibrils at the viral surface thus giving it a hairy-like appearance. This chain is Collagen-like protein 2, found in Acanthamoeba polyphaga (Amoeba).